A 311-amino-acid polypeptide reads, in one-letter code: Progestin and adipoQ receptor family member 3 (311 aa).

A required for interaction with SREBF2 region spans residues 1–20 (MHQKLLKSAHYIELGSYQYW). Over 1–70 (MHQKLLKSAH…KSLFILSNET (70 aa)) the chain is Cytoplasmic. The interval 41-60 (KDNPYITDGYRAYLPSRLCI) is required for interaction with SCAP. A golgi targeting region spans residues 61-71 (KSLFILSNETV). A helical membrane pass occupies residues 71-91 (VNIWSHLLGFFLFFTLGIYDM). Over 92–104 (TSVLPSASASRED) the chain is Lumenal. Residues 105–125 (FVICSICLFCFQVCMLCSVGY) form a helical membrane-spanning segment. Residues 126-145 (HLFSCHRSEKTCRRWMALDY) are Cytoplasmic-facing. The helical transmembrane segment at 146 to 166 (AGISIGILGCYVSGVFYAFYC) threads the bilayer. Residues 167-172 (NNYWRQ) are Lumenal-facing. Residues 173–193 (VYLITVLAMILAVFFAQIHPS) form a helical membrane-spanning segment. Over 194 to 203 (YLTQQWQRLR) the chain is Cytoplasmic. The chain crosses the membrane as a helical span at residues 204-224 (PIIFCSVSGYGVIPTLHWVWL). Residues 225–235 (NGGVSAPIVQD) lie on the Lumenal side of the membrane. The chain crosses the membrane as a helical span at residues 236-256 (FAPRVIVMYVIALLAFLFYIS). The Cytoplasmic segment spans residues 257–275 (KVPERYFPGQLNYLGSSHQ). A helical transmembrane segment spans residues 276–296 (IWHVLAVVMLYWWHQSTVYVM). Residues 297–311 (QYRHSKPCPDYVSHL) lie on the Lumenal side of the membrane. A golgi targeting region spans residues 299–303 (RHSKP).

The protein belongs to the ADIPOR family. Interacts with SCAP and SREBF2; the interactions are direct, increase in low cholesterol conditions and tether SCAP:SREBP complex to the Golgi apparatus. Interaction with SCAP is mutually exclusive with INSIG1. In hepatocytes, interacts with PPARA and HUWE1; the interactions promote PPARA poylubiquitination and HUWE1-mediated degradation. In macrophages, interacts with PPARG and STUB1; the interactions promote PPARG poylubiquitination and STUB1-mediated degradation.

It is found in the golgi apparatus membrane. Golgi-anchored protein which modulates its interactors acitivies by tethering them to the Golgi apparatus. Functions as a spatial regulator of RAF1 kinase by sequestrating it to the Golgi apparatus. Acts as a positive regulator of cholesterol biosynthesis by mediating the anchoring of the SCAP:SREBP complex in the Golgi apparatus, thereby promoting SCAP:SREBF2 complex formation, potentiating SREBF2 and SREBF1 processing and enhancing lipid synthesis. Also regulates PPARA and PPARG functions by mediating their interaction with E3 ubiquitin ligases, such as STUB1 or HUWE1, leading to their polyubiquitination and proteasome-mediated degradation. This is Progestin and adipoQ receptor family member 3 from Mus musculus (Mouse).